Here is a 646-residue protein sequence, read N- to C-terminus: MASGGAFCLIANDGKADKIILAQDLLNSRISNIKNVNKSYGKPDPEPTLSQIEETHLVHFNAHFKPYVPVGFEYNKVRPHTGTPTLGNKLTFGIPQYGDFFHDMVGHHILGACHSSWQDAPIQGTAQMGAHGQLQTFPRNGYDWDNQTPLEGAVYTLVDPFGRPIVPGTKNAYRNLVYYCEYPGERLYENVRFDVNGNSLDEYSSDVTTLVRKFCIPGDKMTGYKHLVGQEVSVEGTSGPLLCNIHDLHKPHQSKPILTDENDTQRTCSHTNPKFLSQHFPENSHNIQTAGKQDITPITDATYLDIRRNVHYSCNGPQTPKYYQPPLALWIKLRFWFNENVNLAIPSVSIPFGERFITIKLASQKDLVNEFPGLFIRQSRFIPGRPSRRNIRFKPWFIPGVINEISLTNNELYINNLFVTPEIHNLFVKRVRFSLIRVHKTQVTHTNNNHHDEKLMSALKWPIEYMFIGLKPTWNISDQNPHQHRDWHKFGHVVNAIMQPTHHAEISFQDRDTALPDACSSISDISPVTYPITLPIIKNISVTAHGINLIDKFPSKFCSSYIPFHYGGNAIKTPDDPGAMMITFALKPREEYQPSGHINVSRAREFYISWDTDYVGSITTADLVVSASAINFLLLQNGSAVLRYST.

It belongs to the NCLDV major capsid protein family. In terms of assembly, homotrimer. The membrane-bound form, but not the cytosolic one, assembles into large complexes. Interacts with the minor capsid proteins M1249L and p17; these interactions form a rigid zipper structure that stabilizes the capsomers.

The protein localises to the virion. It is found in the host endoplasmic reticulum membrane. It localises to the host cytoplasm. The protein resides in the host cytosol. Capsid protein that self-assembles to form the pseudo-hexameric capsomers of the icosahedral capsid. The capsid is constructed of 2760 pseudo-hexameric capsomers and 12 pentameric capsomers, with a T=277 symmetry, about 200 nm in diameter. The capsid encapsulates the DNA-containing nucleoid, the core shell and the inner membrane. Plays an essential role in virion assembly. Involved in virus attachment to the host cell. In Ornithodoros (relapsing fever ticks), this protein is Hexon protein p72.